A 165-amino-acid chain; its full sequence is Cytochrome c-type biogenesis protein CcmE (165 aa).

At Met-1–Arg-7 the chain is on the cytoplasmic side. A helical; Signal-anchor for type II membrane protein transmembrane segment spans residues Leu-8–Ala-28. The Periplasmic portion of the chain corresponds to Phe-29–Arg-165. Heme is bound by residues His-124 and Tyr-128. Residues Gln-144 to Gly-154 are compositionally biased toward low complexity. The disordered stretch occupies residues Gln-144–Arg-165.

It belongs to the CcmE/CycJ family.

The protein resides in the cell inner membrane. In terms of biological role, heme chaperone required for the biogenesis of c-type cytochromes. Transiently binds heme delivered by CcmC and transfers the heme to apo-cytochromes in a process facilitated by CcmF and CcmH. The polypeptide is Cytochrome c-type biogenesis protein CcmE (Rhizobium etli (strain CIAT 652)).